A 396-amino-acid chain; its full sequence is Elongation factor Tu 1 (396 aa).

Positions 10–206 constitute a tr-type G domain; it reads KPHVNVGTIG…ALDTYIPTPK (197 aa). Residues 19–26 are G1; it reads GHVDHGKT. Residue 19-26 participates in GTP binding; that stretch reads GHVDHGKT. Thr-26 is a binding site for Mg(2+). A G2 region spans residues 60 to 64; the sequence is GITIS. The segment at 81–84 is G3; sequence DCPG. Residues 81 to 85 and 136 to 139 each bind GTP; these read DCPGH and NKAD. The tract at residues 136-139 is G4; the sequence is NKAD. Positions 174 to 176 are G5; it reads SAL.

Belongs to the TRAFAC class translation factor GTPase superfamily. Classic translation factor GTPase family. EF-Tu/EF-1A subfamily. As to quaternary structure, monomer.

The protein resides in the cytoplasm. The enzyme catalyses GTP + H2O = GDP + phosphate + H(+). Functionally, GTP hydrolase that promotes the GTP-dependent binding of aminoacyl-tRNA to the A-site of ribosomes during protein biosynthesis. This chain is Elongation factor Tu 1, found in Ruthia magnifica subsp. Calyptogena magnifica.